A 344-amino-acid polypeptide reads, in one-letter code: MIEVGIVGGTGYTGMELLRLVARHPKLRLAEITSRAEAGTRVDELVPALEGAVDNVFTAPDTERLSRCDVVFFATPNGIAMESAPALLEAGCRVIDLGADFRLRDPAVWTEWYGMSHSCPELLEEAVYGLPEANRDALPGARLVANPGCYPTAVALGLLPLLEAGALADGPVVADCKSGVSGAGRAAKVATLFCEANEGFKAYGASGHRHLPEIEQTLARVAGAPVDVTFVPHLVPMTRGMQATLHVVVDRPLDELEALYRQRYADEPFVHLVASGGHPETRWVRGTNHCRIGLHQPPGRPDRAVILSVIDNLTKGAAGQAVQNLNRMFGLEETAGLEGLAYVP.

Cys149 is an active-site residue.

The protein belongs to the NAGSA dehydrogenase family. Type 1 subfamily.

It is found in the cytoplasm. It catalyses the reaction N-acetyl-L-glutamate 5-semialdehyde + phosphate + NADP(+) = N-acetyl-L-glutamyl 5-phosphate + NADPH + H(+). The protein operates within amino-acid biosynthesis; L-arginine biosynthesis; N(2)-acetyl-L-ornithine from L-glutamate: step 3/4. Catalyzes the NADPH-dependent reduction of N-acetyl-5-glutamyl phosphate to yield N-acetyl-L-glutamate 5-semialdehyde. The sequence is that of N-acetyl-gamma-glutamyl-phosphate reductase from Halorhodospira halophila (strain DSM 244 / SL1) (Ectothiorhodospira halophila (strain DSM 244 / SL1)).